We begin with the raw amino-acid sequence, 872 residues long: uncharacterized protein (872 aa).

Positions 496–524 form a coiled coil; sequence LQQHHQDISAMQQQILEEKNQLRRATIDV. Disordered stretches follow at residues 595–736 and 844–872; these read RPAV…SVQQ and TKEN…PQAV. 2 stretches are compositionally biased toward polar residues: residues 615–659 and 670–686; these read QNGN…QTTF and PYAS…NNVV. The span at 687–736 shows a compositional bias: low complexity; sequence QQYQSYYDNPSNQQSNQQSNQQSNQQPNQQPNQQPNQQPNQQPNQQSVQQ.

It is found in the virion. This is an uncharacterized protein from Acanthamoeba polyphaga mimivirus (APMV).